Here is a 359-residue protein sequence, read N- to C-terminus: WAT1-related protein At4g28040 (359 aa).

Helical transmembrane passes span 10–30 (LALV…KAAF), 37–57 (TVFV…ISFI), 66–86 (PSLG…GVTV), 103–123 (ACAM…IVGF), 133–153 (SVAK…MTFL), 170–190 (WLLG…WLIL), 204–224 (TSAC…LALG), 240–260 (SCCI…AWIV), 266–286 (VFSA…GALY), and 292–312 (YLGS…VLWG). Positions 18–131 (TSAGVALFTK…GFESIKRRSM (114 aa)) constitute an EamA 1 domain. One can recognise an EamA 2 domain in the interval 199 to 310 (PDHLYTSACT…AIILGLYIVL (112 aa)).

The protein belongs to the drug/metabolite transporter (DMT) superfamily. Plant drug/metabolite exporter (P-DME) (TC 2.A.7.4) family.

It is found in the membrane. The chain is WAT1-related protein At4g28040 from Arabidopsis thaliana (Mouse-ear cress).